The primary structure comprises 698 residues: Ion-translocating oxidoreductase complex subunit C (698 aa).

2 4Fe-4S ferredoxin-type domains span residues 366-397 and 407-436; these read TEMGLSEPEQSCIRCGLCVDACPAGLLPQQLY and KARNHNLFDCIECGACAYVCPSNIPLVQYY. Positions 377, 380, 383, 387, 416, 419, 422, and 426 each coordinate [4Fe-4S] cluster.

It belongs to the 4Fe4S bacterial-type ferredoxin family. RnfC subfamily. The complex is composed of six subunits: RnfA, RnfB, RnfC, RnfD, RnfE and RnfG. The cofactor is [4Fe-4S] cluster.

Its subcellular location is the cell inner membrane. Functionally, part of a membrane-bound complex that couples electron transfer with translocation of ions across the membrane. In Yersinia pseudotuberculosis serotype O:1b (strain IP 31758), this protein is Ion-translocating oxidoreductase complex subunit C.